Consider the following 594-residue polypeptide: Potassium-transporting ATPase potassium-binding subunit (594 aa).

The next 10 membrane-spanning stretches (helical) occupy residues 3–23 (ADFL…APLL), 67–87 (AVAM…LQRL), 136–156 (ALTV…IALV), 179–199 (LYVL…QGVV), 287–307 (LEML…GEMV), 314–334 (VAIL…AAYF), 415–435 (GLYG…LMIG), 453–473 (VALV…VAVL), 519–539 (VLLG…ILAL), and 562–582 (LFVA…YVPA).

This sequence belongs to the KdpA family. The system is composed of three essential subunits: KdpA, KdpB and KdpC.

The protein localises to the cell inner membrane. Its function is as follows. Part of the high-affinity ATP-driven potassium transport (or Kdp) system, which catalyzes the hydrolysis of ATP coupled with the electrogenic transport of potassium into the cytoplasm. This subunit binds the periplasmic potassium ions and delivers the ions to the membrane domain of KdpB through an intramembrane tunnel. This Bordetella bronchiseptica (strain ATCC BAA-588 / NCTC 13252 / RB50) (Alcaligenes bronchisepticus) protein is Potassium-transporting ATPase potassium-binding subunit.